Reading from the N-terminus, the 302-residue chain is 2-phosphoglycerate kinase (302 aa).

Positions 2–89 (IKVIERDGKV…FWRRFRKLKI (88 aa)) constitute an ATP-cone domain.

It belongs to the 2-phosphoglycerate kinase family. The cofactor is a divalent metal cation.

It carries out the reaction (2R)-2-phosphoglycerate + ATP = (2R)-2,3-bisphosphoglycerate + ADP + H(+). It functions in the pathway thermoadapter biosynthesis; cyclic 2,3-diphosphoglycerate biosynthesis; cyclic 2,3-diphosphoglycerate from 2-phospho-D-glycerate: step 1/2. Functionally, catalyzes the phosphorylation of 2-phosphoglycerate to 2,3-diphosphoglycerate. Involved in the biosynthesis of cyclic 2,3-bisphosphoglycerate, a thermoprotectant. This Pyrococcus furiosus (strain ATCC 43587 / DSM 3638 / JCM 8422 / Vc1) protein is 2-phosphoglycerate kinase.